The primary structure comprises 234 residues: 1-(5-phosphoribosyl)-5-[(5-phosphoribosylamino)methylideneamino] imidazole-4-carboxamide isomerase (234 aa).

The active-site Proton acceptor is Asp9. Asp131 (proton donor) is an active-site residue.

Belongs to the HisA/HisF family.

It is found in the cytoplasm. It catalyses the reaction 1-(5-phospho-beta-D-ribosyl)-5-[(5-phospho-beta-D-ribosylamino)methylideneamino]imidazole-4-carboxamide = 5-[(5-phospho-1-deoxy-D-ribulos-1-ylimino)methylamino]-1-(5-phospho-beta-D-ribosyl)imidazole-4-carboxamide. Its pathway is amino-acid biosynthesis; L-histidine biosynthesis; L-histidine from 5-phospho-alpha-D-ribose 1-diphosphate: step 4/9. This is 1-(5-phosphoribosyl)-5-[(5-phosphoribosylamino)methylideneamino] imidazole-4-carboxamide isomerase from Staphylococcus epidermidis (strain ATCC 12228 / FDA PCI 1200).